The following is a 70-amino-acid chain: Sec-independent protein translocase protein TatA (70 aa).

A helical transmembrane segment spans residues 1 to 21; sequence MFGLGGQELILILLIILLLFG. Positions 50-62 are enriched in basic and acidic residues; sequence FNKVVDEPPRKTP. A disordered region spans residues 50 to 70; the sequence is FNKVVDEPPRKTPENSTGSKS.

It belongs to the TatA/E family. In terms of assembly, forms a complex with TatC.

It localises to the cell inner membrane. Functionally, part of the twin-arginine translocation (Tat) system that transports large folded proteins containing a characteristic twin-arginine motif in their signal peptide across membranes. TatA could form the protein-conducting channel of the Tat system. This Chlorobium limicola (strain DSM 245 / NBRC 103803 / 6330) protein is Sec-independent protein translocase protein TatA.